Reading from the N-terminus, the 201-residue chain is Fimbrial protein FimX (201 aa).

An N-terminal signal peptide occupies residues Met-1–Ala-21. A disulfide bridge connects residues Cys-37 and Cys-79.

Belongs to the fimbrial protein family.

It localises to the fimbrium. Its function is as follows. Bordetella pertussis is the causative agent of whooping cough. An essential step in the disease process is the attachment of the bacteria to the ciliated epithelium of the respiratory tract, enabling the organism to resist normal host-clearance mechanisms. It is unclear which bacterial cell surface component are responsible for adherence but the fimbriae of B.pertussis are prime candidates for being involved in this process. The chain is Fimbrial protein FimX (fimX) from Bordetella pertussis (strain Tohama I / ATCC BAA-589 / NCTC 13251).